Consider the following 321-residue polypeptide: Peptidase 1 (321 aa).

An N-terminal signal peptide occupies residues 1–18 (MKIILAIASLLVLSAVYA). Residues 19-98 (RPASIKTFEE…LKTQFDLNAE (80 aa)) constitute a propeptide that is removed on maturation. Asparagine 34 is a glycosylation site (N-linked (GlcNAc...) asparagine). Cysteine 130 and cysteine 170 are oxidised to a cystine. Cysteine 133 is an active-site residue. The N-linked (GlcNAc...) asparagine glycan is linked to asparagine 151. Residues histidine 269 and asparagine 289 contribute to the active site.

This sequence belongs to the peptidase C1 family.

It localises to the secreted. The enzyme catalyses Broad endopeptidase specificity.. Its function is as follows. Probable thiol protease. In Euroglyphus maynei (Mayne's house dust mite), this protein is Peptidase 1 (EURM1).